The sequence spans 286 residues: Bifunctional protein FolD (286 aa).

Residues 165 to 167 and S190 each bind NADP(+); that span reads GRS.

This sequence belongs to the tetrahydrofolate dehydrogenase/cyclohydrolase family. As to quaternary structure, homodimer.

The catalysed reaction is (6R)-5,10-methylene-5,6,7,8-tetrahydrofolate + NADP(+) = (6R)-5,10-methenyltetrahydrofolate + NADPH. It catalyses the reaction (6R)-5,10-methenyltetrahydrofolate + H2O = (6R)-10-formyltetrahydrofolate + H(+). It functions in the pathway one-carbon metabolism; tetrahydrofolate interconversion. In terms of biological role, catalyzes the oxidation of 5,10-methylenetetrahydrofolate to 5,10-methenyltetrahydrofolate and then the hydrolysis of 5,10-methenyltetrahydrofolate to 10-formyltetrahydrofolate. This Burkholderia lata (strain ATCC 17760 / DSM 23089 / LMG 22485 / NCIMB 9086 / R18194 / 383) protein is Bifunctional protein FolD.